Consider the following 180-residue polypeptide: Flavodoxin 2 (180 aa).

Residues 4-173 (IGLFFGSNTG…RVAAWLAQIA (170 aa)) form the Flavodoxin-like domain. FMN is bound by residues 10-15 (SNTGKT), threonine 57, glycine 61, aspartate 99, 106-108 (NYL), and aspartate 155.

Requires FMN as cofactor.

Its function is as follows. Flavodoxins are low-potential electron donors to a number of redox enzymes. NifF is the electron donor to nitrogenase, and is thus implicated in nitrogen fixation. Does not function as an electron donor to nitrite reductase. This is Flavodoxin 2 from Azotobacter vinelandii.